A 146-amino-acid polypeptide reads, in one-letter code: Large ribosomal subunit protein bL19 (146 aa).

The tract at residues 116–146 (ADRKRIDQDRAAERAAKEEAQKAQEPKASQE) is disordered. Residues 119-146 (KRIDQDRAAERAAKEEAQKAQEPKASQE) show a composition bias toward basic and acidic residues.

As to quaternary structure, part of the 50S risobomal subunit. Contacts protein L14. Forms a bridge to the 30S subunit in the 70S ribosome, contacting the 16S rRNA.

Its function is as follows. Contacts the 16S rRNA of the 30S subunit (part of bridge B6), connecting the 2 subunits. This Thermus thermophilus (strain ATCC 27634 / DSM 579 / HB8) protein is Large ribosomal subunit protein bL19 (rplS).